Here is a 205-residue protein sequence, read N- to C-terminus: Adenylyl-sulfate kinase (205 aa).

Position 31-38 (31-38 (GLSGAGKS)) interacts with ATP. Catalysis depends on serine 105, which acts as the Phosphoserine intermediate.

The protein belongs to the APS kinase family.

The enzyme catalyses adenosine 5'-phosphosulfate + ATP = 3'-phosphoadenylyl sulfate + ADP + H(+). It functions in the pathway sulfur metabolism; hydrogen sulfide biosynthesis; sulfite from sulfate: step 2/3. Catalyzes the synthesis of activated sulfate. The protein is Adenylyl-sulfate kinase of Shewanella denitrificans (strain OS217 / ATCC BAA-1090 / DSM 15013).